We begin with the raw amino-acid sequence, 344 residues long: uncharacterized protein (344 aa).

Residues 1 to 98 lie on the Cytoplasmic side of the membrane; that stretch reads MIDFVKSRDT…NNDEIGIWNY (98 aa). Residues 99–119 traverse the membrane as a helical segment; the sequence is ISVAEMGGVLLFLSYWIWTCL. His120 is a topological domain (lumenal). A helical transmembrane segment spans residues 121 to 141; the sequence is FSKIIFPAQKVICLYIFLFAL. Residues 142 to 169 are Cytoplasmic-facing; it reads NQTLQECIEEYVFSSECIKYRQFYSVYE. The chain crosses the membrane as a helical span at residues 170–192; that stretch reads IIDFLRTNFYRLFVIYCALGFGI. The Lumenal segment spans residues 193 to 198; sequence TRTVPK. The helical transmembrane segment at 199–219 threads the bilayer; that stretch reads YLMIKGISIVIALCSVYWISL. Residues 220–222 lie on the Cytoplasmic side of the membrane; that stretch reads YKD. A helical transmembrane segment spans residues 223–243; it reads VYVVSEIFDMIQYEVFPAIWV. Topologically, residues 244 to 273 are lumenal; sequence YSICHLLKQCTSVTTYENASKARFFRRMLN. The chain crosses the membrane as a helical span at residues 274 to 294; sequence AFIFIFCASPMLHYLSNIIFG. Residues 295-344 lie on the Cytoplasmic side of the membrane; sequence NFDYRLSVIIGDLFTFMEKIAFPCYIMFPTHNEALAYNRNVAEEAQEKMI.

It is found in the endoplasmic reticulum membrane. This is an uncharacterized protein from Schizosaccharomyces pombe (strain 972 / ATCC 24843) (Fission yeast).